The following is a 332-amino-acid chain: tRNA uridine(34) hydroxylase (332 aa).

In terms of domain architecture, Rhodanese spans Ser-123 to Ser-217. Residue Cys-177 is the Cysteine persulfide intermediate of the active site. The tract at residues Ser-302–Lys-332 is disordered. Over residues Ser-310–Lys-319 the composition is skewed to basic and acidic residues.

It belongs to the TrhO family.

It carries out the reaction uridine(34) in tRNA + AH2 + O2 = 5-hydroxyuridine(34) in tRNA + A + H2O. Functionally, catalyzes oxygen-dependent 5-hydroxyuridine (ho5U) modification at position 34 in tRNAs. The chain is tRNA uridine(34) hydroxylase from Shewanella woodyi (strain ATCC 51908 / MS32).